Here is a 378-residue protein sequence, read N- to C-terminus: P2X receptor A (378 aa).

Topologically, residues 1–27 (MGFSFDWDDIFQYSTVKIVRIRDRRLG) are cytoplasmic. The chain crosses the membrane as a helical span at residues 28-48 (ILHLSFLVGIVAYIVVYSAII). Over 49–307 (KKGYLFTEVP…IQTGTIGSFH (259 aa)) the chain is Lumenal. The interval 290–303 (RHGIRVIFIQTGTI) is pore-forming motif. The chain crosses the membrane as a helical span at residues 308-328 (FQTLLLTLVSGLGLLAVATTV). At 329 to 378 (VDQLAIRLLPQRKSYSSLKFQVTESMSNPMKKRITTDEGEDVLYTRIEGL) the chain is on the cytoplasmic side.

It belongs to the P2X receptor family.

The protein resides in the contractile vacuole membrane. P2X receptors are ATP-gated ion channels that play a role in intracellular calcium signaling. Not required for the purinergic response to extracellular nucleotides. Inward currents evoked by intracellular ATP and ATP analogs. Exclusively selective for ATP over other nucleotides. Insensitive to P2 receptor antagonists PPADS, suramin and 2',3'-O-(2,4,6-trinitrophenyl)-ATP but inhibited by nanomolar concentrations of copper and sodium ion. More permeable to ammonium than either sodium or potassium ions and less permeable to choline. It has been reported that p2xA is not essential for osmoregulation, however this information is in contradiction with another source which indicates that p2xA is required for osmoregulation. Found to be permeable to chloride ions. Inhibited by copper and sodium ions. This Dictyostelium discoideum (Social amoeba) protein is P2X receptor A (p2xA).